The sequence spans 279 residues: uncharacterized protein (279 aa).

Low complexity-rich tracts occupy residues 1-25 (MNENNKNNSSEDLNNNNNNNNNNNN), 86-151 (PSQS…NGNN), and 232-250 (NKNNNNNNNNDNNNNDDNN). Disordered regions lie at residues 1–27 (MNENNKNNSSEDLNNNNNNNNNNNNIK), 83–153 (NLFP…NNID), and 213–260 (QSVN…KVKS).

This is an uncharacterized protein from Dictyostelium discoideum (Social amoeba).